The primary structure comprises 267 residues: 5'-nucleotidase SurE (267 aa).

Residues Asp-14, Asp-15, Ser-45, and Asn-100 each contribute to the a divalent metal cation site.

This sequence belongs to the SurE nucleotidase family. A divalent metal cation is required as a cofactor.

The protein localises to the cytoplasm. The catalysed reaction is a ribonucleoside 5'-phosphate + H2O = a ribonucleoside + phosphate. In terms of biological role, nucleotidase that shows phosphatase activity on nucleoside 5'-monophosphates. In Methanosarcina mazei (strain ATCC BAA-159 / DSM 3647 / Goe1 / Go1 / JCM 11833 / OCM 88) (Methanosarcina frisia), this protein is 5'-nucleotidase SurE.